A 159-amino-acid polypeptide reads, in one-letter code: Aspartate carbamoyltransferase regulatory chain (159 aa).

4 residues coordinate Zn(2+): C108, C113, C138, and C141.

This sequence belongs to the PyrI family. In terms of assembly, contains catalytic and regulatory chains. It depends on Zn(2+) as a cofactor.

Involved in allosteric regulation of aspartate carbamoyltransferase. The polypeptide is Aspartate carbamoyltransferase regulatory chain (Thermofilum pendens (strain DSM 2475 / Hrk 5)).